Here is a 260-residue protein sequence, read N- to C-terminus: MNSSSAVSKRLEGKVAIVTGGASGIGASTVSLFHDHGAKVVIADIQDNLGQTLAGRLGRNISYIHCDVTDENQVRALVDATVAKHGGVDIMFSNAGIVEGPTVSIFDADKGALERLLGINLVGGFLAAKHAARVMSPTKKGCIIFTASACTEVAGISGPGYVASKYGIVGLMKSLAAELGSHGIRANCVSPFGVLTGIAAGDDKTKLMFEGLMSKVGNLKGKILTADDVAKAALYLASDEASYVSGVNLVLDGGYSVVNP.

NAD(+) contacts are provided by residues 20–26 (GGASGIG), Asp44, 67–68 (DV), and 94–96 (NAG). The Proton donor role is filled by Ser148. Residues Tyr161, Lys165, and Thr196 each contribute to the NAD(+) site. Tyr161 acts as the Proton acceptor in catalysis. Lys165 functions as the Proton donor/acceptor in the catalytic mechanism.

Belongs to the short-chain dehydrogenases/reductases (SDR) family.

The catalysed reaction is (1R,2S,4R)-borneol + NAD(+) = (1R,4R)-camphor + NADH + H(+). Involved in the biosynthesis of monoterpene natural products related to camphor. Catalayzes the oxidation of (+)-borneol to (+)-camphor. Shows absolute selectivity towards (+)-borneol. Catalyzes the oxidation of (+)-isoborneol to (-)-camphor. Shows absolute selectivity towards (+)-isoborneol. In Salvia officinalis (Sage), this protein is (+)-borneol dehydrogenase 1.